The chain runs to 158 residues: G-protein-signaling modulator 3 (158 aa).

Positions Met1–Gly53 are disordered. 2 positions are modified to phosphoserine: Ser33 and Ser37. A compositionally biased stretch (pro residues) spans Ser33 to Gly42. Over residues Thr43–Gly53 the composition is skewed to low complexity. Ser54 and Ser57 each carry phosphoserine. At Thr60 the chain carries Phosphothreonine. The region spanning Thr60–Phe82 is the GoLoco 1 domain. Residues Gln78–Arg97 are disordered. Residues Lys86–Pro96 are compositionally biased toward pro residues. GoLoco domains lie at Lys102–Pro124 and Gly130–Pro153.

It localises to the cytoplasm. Functionally, interacts with subunit of G(i) alpha proteins and regulates the activation of G(i) alpha proteins. This is G-protein-signaling modulator 3 (Gpsm3) from Rattus norvegicus (Rat).